The following is an 841-amino-acid chain: Nuclear RNA export factor 2 (841 aa).

The segment at 1–285 (MPNQMRVLDF…NFELVDGKPF (285 aa)) is RNA-binding unit probably involved in Piwi-dependent recruitment and single-stranded RNA-PPNP complex formation. LRR repeat units follow at residues 200–221 (RLNGFILSNNRIRDIRPLTLLA), 224–245 (DYALLDLRGNKIKSAERLCRAL), and 249–270 (RARELLLENNPIVKISNFPANI). The tract at residues 286 to 553 (NMLHKIFSPL…EYVRAVKEVF (268 aa)) is necessary for silencing function. An RRM domain is found at 325-408 (WHAFMIPDPS…IFRYYLRMNV (84 aa)). LRR repeat units follow at residues 475–496 (TCSEIRLCHNKVLVLDGAHVLG), 500–521 (CLRAVDLSHNWVQDLSSIHSLG), and 524–545 (PLKSLVLHGNKLCRNYRLPSEY). One can recognise an NTF2 domain in the interval 585-758 (LVGAFLENYL…LKIANERLHI (174 aa)). In terms of domain architecture, TAP-C spans 788–841 (DVKDHKLLLFQEVTGLISTWVTSIVEEADWDFERALKLFIQKNADHEIPDLAFA).

The protein belongs to the NXF family. In terms of assembly, in the ovaries, part of a complex composed of at least Panx, nxf2, piwi and Nxt1. The complex is knowns as Panx-induced cotranscriptional silencing (PICTS) complex, Panx-nxf2-dependent TAP/p15 silencing (Pandas complex), SFiNX (silencing factor interacting nuclear export variant) or piwi-Panx-nxf2-p15 (PPNP) complex. Interacts (via TAP-C domain) with Panx (via NIR region); the interaction is direct. Interacts (via NTF2 domain) with Nxt1; the interaction is direct and prevents Nxt1 binding to nucleoporins. Interacts with sbr/Nxf1. As to expression, expressed in female gonads (at protein level). Expressed ubiquitously.

The protein resides in the cytoplasm. Its subcellular location is the nucleus. The protein localises to the nucleoplasm. In terms of biological role, may be involved in the export of mRNA from the nucleus to the cytoplasm. In the ovaries, forms a complex with nxf2, piwi and Nxt1 which acts as effectors of cotranscriptional transposon silencing. On recruitment to a target transcript, interacts with single stranded RNA, thereby anchoring the complex via the nascent target transcript to chromatin and allowing Panx to recruit silencing effectors to establishing repressive heterochromatin at transposon loci. Does not affect piRNA biogenesis. The interaction with Panx stabilizes the nuclear protein complex. Does not bind nucleoporins, but regulates sbr/Nxf1 binding to nucleoporins and, indirectly, transposon exports. The chain is Nuclear RNA export factor 2 (nxf2) from Drosophila melanogaster (Fruit fly).